The sequence spans 1579 residues: Eukaryotic translation initiation factor 4 gamma 3 (1579 aa).

Disordered regions lie at residues 1–35 (MNSQ…RPGV) and 128–326 (TQQQ…GPSL). The segment covering 10-25 (PFFQRPQIQPPRAAIP) has biased composition (low complexity). Residues 26–35 (NSSPSIRPGV) are compositionally biased toward polar residues. Residues 134 to 162 (PAKREKKTIRIRDPNQGGKDITEEIMSGG) are PABPC1-binding. A compositionally biased stretch (pro residues) spans 167-183 (PTPPIGRPASTPTPPQQ). The residue at position 168 (threonine 168) is a Phosphothreonine. Phosphoserine occurs at positions 230, 232, and 267. Residues 266-292 (SSPTSLPPLARSSLPSPMSAALSSQPL) are compositionally biased toward low complexity. The segment covering 295-308 (AEDKCELPSSKEED) has biased composition (basic and acidic residues). The segment covering 315 to 326 (PTSCTAASGPSL) has biased composition (polar residues). Residues serine 436, serine 470, serine 472, and serine 490 each carry the phosphoserine modification. The span at 454–470 (RTCLSKDAKEMQDKAES) shows a compositional bias: basic and acidic residues. Disordered stretches follow at residues 454–615 (RTCL…DTEG), 681–706 (RQTP…QRRE), and 724–744 (AENA…PESI). Acidic residues predominate over residues 471–480 (ESDGQAEETA). Residues 481-501 (DPQSLHSGRSPAPVQTATTAP) are compositionally biased toward polar residues. 2 stretches are compositionally biased toward basic and acidic residues: residues 506 to 515 (KTKEQTRTPD) and 549 to 563 (SERD…KAEE). Over residues 589–598 (SGSADSSADG) the composition is skewed to low complexity. The span at 606–615 (ESWKPADTEG) shows a compositional bias: basic and acidic residues. The EIF4E-binding stretch occupies residues 614–625 (EGKKQYDREFLL). Residues 694-1014 (VGPRRSQPGQ…EQRKVQQLMT (321 aa)) form an eIF3/EIF4A-binding region. 5 HEAT repeats span residues 740-778 (DPES…LTVD), 779-826 (TEER…GNTV), 827-900 (NFRK…LKML), 901-939 (TEAI…DFEK), and 940-979 (AKPR…LCNW). Positions 750-978 (FRKVRSILNK…QDVIDLRLCN (229 aa)) constitute an MIF4G domain. Residues 855-871 (KELEAASAPEERTRLHD) are compositionally biased toward basic and acidic residues. Positions 855-875 (KELEAASAPEERTRLHDELEE) are disordered. A coiled-coil region spans residues 989–1018 (KTIEQIHKEAKIEEQEEQRKVQQLMTKEKR). Disordered stretches follow at residues 1009–1037 (VQQL…QGAK) and 1067–1214 (LGSW…LSEE). Positions 1086-1098 (LRSSASSLNRFSP) are enriched in low complexity. At serine 1150 the chain carries Phosphoserine; by CaMK1. Basic and acidic residues-rich tracts occupy residues 1150–1169 (SSKD…EMLE) and 1179–1197 (DAER…ELAK). The stretch at 1154–1176 (LLDNQSQEEQRREMLETVKQLTG) forms a coiled coil. Serine 1212 carries the phosphoserine modification. Positions 1215-1337 (EVERKSKSII…SMRELIVEFS (123 aa)) constitute an MI domain. The stretch at 1406-1438 (SSEALSKKELSAEELSQRLEKLIMEEKADDERI) forms a coiled coil. The W2 domain maps to 1410–1579 (LSKKELSAEE…REAEEESEDN (170 aa)). The segment at 1427-1579 (LIMEEKADDE…REAEEESEDN (153 aa)) is EIF4A-binding. Residues 1565 to 1579 (FFTWLREAEEESEDN) form a necessary but not sufficient for MKNK1-binding region.

The protein belongs to the eukaryotic initiation factor 4G family. As to quaternary structure, interacts with EIF4A, EIF4E, eIF3 and PABPC1. Part of a complex with EIF4E. eIF4F is a multi-subunit complex, the composition of which varies with external and internal environmental conditions. It is composed of at least EIF4A, EIF4E and EIF4G1/EIF4G3. EIF4G1/EIF4G3 interacts through its C-terminus with the serine/threonine kinases MKNK1, and with MKNK2. Appears to act as a scaffold protein, holding these enzymes in place to phosphorylate eIF4E. Non-phosphorylated EIF4EBP1 competes with EIF4G1/EIFG3 to interact with EIF4E; insulin stimulated MAP-kinase (MAPK1 and MAPK3) phosphorylation of EIF4EBP1 causes dissociation of the complex allowing EIF4G1/EIF4G3 to bind and consequent initiation of translation. EIF4G1/EIF4G3 interacts with PABPC1 to bring about circularization of the mRNA. Interacts with FXR1; promoting translation of FXR1 target mRNAs.

Its function is as follows. Component of the protein complex eIF4F, which is involved in the recognition of the mRNA cap, ATP-dependent unwinding of 5'-terminal secondary structure and recruitment of mRNA to the ribosome. Functional homolog of EIF4G1. The polypeptide is Eukaryotic translation initiation factor 4 gamma 3 (Eif4g3) (Mus musculus (Mouse)).